Consider the following 194-residue polypeptide: GTP cyclohydrolase 1 (194 aa).

Cys83, His86, and Cys155 together coordinate Zn(2+).

It belongs to the GTP cyclohydrolase I family. Toroid-shaped homodecamer, composed of two pentamers of five dimers.

It carries out the reaction GTP + H2O = 7,8-dihydroneopterin 3'-triphosphate + formate + H(+). It participates in cofactor biosynthesis; 7,8-dihydroneopterin triphosphate biosynthesis; 7,8-dihydroneopterin triphosphate from GTP: step 1/1. The polypeptide is GTP cyclohydrolase 1 (Streptococcus pyogenes serotype M3 (strain ATCC BAA-595 / MGAS315)).